A 105-amino-acid chain; its full sequence is Large ribosomal subunit protein uL24 (105 aa).

Belongs to the universal ribosomal protein uL24 family. In terms of assembly, part of the 50S ribosomal subunit.

Functionally, one of two assembly initiator proteins, it binds directly to the 5'-end of the 23S rRNA, where it nucleates assembly of the 50S subunit. In terms of biological role, one of the proteins that surrounds the polypeptide exit tunnel on the outside of the subunit. The sequence is that of Large ribosomal subunit protein uL24 from Methylobacillus flagellatus (strain ATCC 51484 / DSM 6875 / VKM B-1610 / KT).